The sequence spans 56 residues: Ovomucoid (56 aa).

Positions 6-56 constitute a Kazal-like domain; it reads VDCSEYPKPACTLEHRPLCGSDNKTYGNKCNFCNAVVESNGTLTLSHFGKC. 3 disulfide bridges follow: Cys8–Cys38, Cys16–Cys35, and Cys24–Cys56. A glycan (N-linked (GlcNAc...) asparagine) is linked at Asn45.

It localises to the secreted. The polypeptide is Ovomucoid (Pavo cristatus (Indian peafowl)).